The primary structure comprises 122 residues: Holo-[acyl-carrier-protein] synthase (122 aa).

D8 and E56 together coordinate Mg(2+).

This sequence belongs to the P-Pant transferase superfamily. AcpS family. Mg(2+) is required as a cofactor.

The protein localises to the cytoplasm. It carries out the reaction apo-[ACP] + CoA = holo-[ACP] + adenosine 3',5'-bisphosphate + H(+). Transfers the 4'-phosphopantetheine moiety from coenzyme A to a Ser of acyl-carrier-protein. This Streptomyces griseus subsp. griseus (strain JCM 4626 / CBS 651.72 / NBRC 13350 / KCC S-0626 / ISP 5235) protein is Holo-[acyl-carrier-protein] synthase.